The following is a 282-amino-acid chain: ADP-ribosyl cyclase/cyclic ADP-ribose hydrolase (282 aa).

The first 24 residues, 1–24 (MSPVAIVACVCLAVTLTRISPSEA), serve as a signal peptide directing secretion. 5 disulfide bridges follow: C39–C58, C75–C155, C136–C149, C230–C251, and C263–C272.

This sequence belongs to the ADP-ribosyl cyclase family. Ovotestis.

The protein resides in the cytoplasmic vesicle. The enzyme catalyses NAD(+) = cyclic ADP-beta-D-ribose + nicotinamide + H(+). The catalysed reaction is NAD(+) + H2O = ADP-D-ribose + nicotinamide + H(+). It carries out the reaction nicotinate + NADP(+) = nicotinate-adenine dinucleotide phosphate + nicotinamide. Its activity is regulated as follows. Activity is presumably regulated by its sequestration in vesicles before egg fertilization. After fertilization and upon NADase release, it could then be regulated via its potential phosphorylation sites. Synthesizes cyclic ADP-ribose (cADPR), a second messenger for calcium mobilization from endoplasmic reticulum. Might make the Ca(2+) mobilizer nicotinate-adenine dinucleotide phosphate. Does not have cADPR hydrolase activity. The sequence is that of ADP-ribosyl cyclase/cyclic ADP-ribose hydrolase from Aplysia kurodai (Kuroda's sea hare).